Reading from the N-terminus, the 394-residue chain is Obg-like ATPase 1 (394 aa).

One can recognise an OBG-type G domain in the interval 21–285 (LKAGIVGLAN…MSPEDAEEEL (265 aa)). ATP is bound at residue 30–35 (NVGKST). Residues S34 and T55 each contribute to the Mg(2+) site. At T89 the chain carries Phosphothreonine. K98 is covalently cross-linked (Glycyl lysine isopeptide (Lys-Gly) (interchain with G-Cter in ubiquitin)). Phosphoserine occurs at positions 116 and 119. L233 provides a ligand contact to ATP. A TGS domain is found at 306–389 (DLISFFTCGP…EDGDIIYFRA (84 aa)).

Belongs to the TRAFAC class OBG-HflX-like GTPase superfamily. OBG GTPase family. YchF/OLA1 subfamily. Monomer. Interacts with the 26S proteasome subunit RPT6. The cofactor is Mg(2+).

The protein resides in the cytoplasm. Its function is as follows. Hydrolyzes ATP, and can also hydrolyze GTP with lower efficiency. Has lower affinity for GTP. In Saccharomyces cerevisiae (strain ATCC 204508 / S288c) (Baker's yeast), this protein is Obg-like ATPase 1.